The chain runs to 461 residues: Bifunctional protein GlmU (461 aa).

The segment at methionine 1–arginine 234 is pyrophosphorylase. Residues leucine 8–glycine 11, lysine 22, glutamine 77, glycine 82–threonine 83, tyrosine 104–aspartate 106, glycine 141, glutamate 159, asparagine 174, and asparagine 232 contribute to the UDP-N-acetyl-alpha-D-glucosamine site. Aspartate 106 lines the Mg(2+) pocket. Position 232 (asparagine 232) interacts with Mg(2+). A linker region spans residues valine 235 to alanine 255. The tract at residues glycine 256–serine 461 is N-acetyltransferase. Arginine 338 and lysine 356 together coordinate UDP-N-acetyl-alpha-D-glucosamine. Histidine 368 (proton acceptor) is an active-site residue. Residues tyrosine 371 and asparagine 382 each contribute to the UDP-N-acetyl-alpha-D-glucosamine site. Acetyl-CoA is bound by residues alanine 385, asparagine 391–tyrosine 392, serine 410, alanine 428, and arginine 445.

In the N-terminal section; belongs to the N-acetylglucosamine-1-phosphate uridyltransferase family. The protein in the C-terminal section; belongs to the transferase hexapeptide repeat family. As to quaternary structure, homotrimer. The cofactor is Mg(2+).

The protein resides in the cytoplasm. It catalyses the reaction alpha-D-glucosamine 1-phosphate + acetyl-CoA = N-acetyl-alpha-D-glucosamine 1-phosphate + CoA + H(+). It carries out the reaction N-acetyl-alpha-D-glucosamine 1-phosphate + UTP + H(+) = UDP-N-acetyl-alpha-D-glucosamine + diphosphate. It participates in nucleotide-sugar biosynthesis; UDP-N-acetyl-alpha-D-glucosamine biosynthesis; N-acetyl-alpha-D-glucosamine 1-phosphate from alpha-D-glucosamine 6-phosphate (route II): step 2/2. It functions in the pathway nucleotide-sugar biosynthesis; UDP-N-acetyl-alpha-D-glucosamine biosynthesis; UDP-N-acetyl-alpha-D-glucosamine from N-acetyl-alpha-D-glucosamine 1-phosphate: step 1/1. The protein operates within bacterial outer membrane biogenesis; LPS lipid A biosynthesis. In terms of biological role, catalyzes the last two sequential reactions in the de novo biosynthetic pathway for UDP-N-acetylglucosamine (UDP-GlcNAc). The C-terminal domain catalyzes the transfer of acetyl group from acetyl coenzyme A to glucosamine-1-phosphate (GlcN-1-P) to produce N-acetylglucosamine-1-phosphate (GlcNAc-1-P), which is converted into UDP-GlcNAc by the transfer of uridine 5-monophosphate (from uridine 5-triphosphate), a reaction catalyzed by the N-terminal domain. This Colwellia psychrerythraea (strain 34H / ATCC BAA-681) (Vibrio psychroerythus) protein is Bifunctional protein GlmU.